Reading from the N-terminus, the 346-residue chain is MLLREVTREERKNFYTNEWKVKDIPDFIVKTLELREFGFDHSGEGPSDRKNQYTDIRDLEDYIRATAPYAVYSSVALYEKPQEMEGWLGTELVFDIDAKDLPLRRCEHEPGTVCPICLNDAKEIVRDTVIILREELGFNDIHIIYSGRGYHIRVLDEWALKLDSKSRERILSFVSASEIEDVEEFRKLLLNKRGWFVLNHGYPRAFRLRFGYFILRIKLPHLINAGIRKSIAKSILKSKEEIYEEFVRKAILAAFPQGVGIESLAKLFALSTRFSKSYFDGRVTVDLKRILRLPSTLHSKVGLIAKYVGTNERDVMRFNPFKHAVPKFRKEEVKVEYKKFLESLGT.

Active-site residues include Asp95 and Asp97. Zn(2+) is bound by residues Cys106, His108, Cys114, and Cys117. The short motif at 106-117 (CEHEPGTVCPIC) is the Zinc knuckle motif element. Residue Asp280 is part of the active site.

It belongs to the eukaryotic-type primase small subunit family. As to quaternary structure, heterodimer of a small subunit (PriS) and a large subunit (PriL). Mg(2+) serves as cofactor. Mn(2+) is required as a cofactor.

In terms of biological role, catalytic subunit of DNA primase, an RNA polymerase that catalyzes the synthesis of short RNA molecules used as primers for DNA polymerase during DNA replication. The small subunit contains the primase catalytic core and has DNA synthesis activity on its own. Binding to the large subunit stabilizes and modulates the activity, increasing the rate of DNA synthesis while decreasing the length of the DNA fragments, and conferring RNA synthesis capability. The DNA polymerase activity may enable DNA primase to also catalyze primer extension after primer synthesis. May also play a role in DNA repair. This is DNA primase small subunit PriS from Pyrococcus horikoshii (strain ATCC 700860 / DSM 12428 / JCM 9974 / NBRC 100139 / OT-3).